Here is a 365-residue protein sequence, read N- to C-terminus: tRNA/tmRNA (uracil-C(5))-methyltransferase (365 aa).

Residues Gln-189, Tyr-217, Asn-222, Glu-238, and Asp-298 each coordinate S-adenosyl-L-methionine. The active-site Nucleophile is Cys-323. Catalysis depends on Glu-357, which acts as the Proton acceptor.

It belongs to the class I-like SAM-binding methyltransferase superfamily. RNA M5U methyltransferase family. TrmA subfamily.

The enzyme catalyses uridine(54) in tRNA + S-adenosyl-L-methionine = 5-methyluridine(54) in tRNA + S-adenosyl-L-homocysteine + H(+). The catalysed reaction is uridine(341) in tmRNA + S-adenosyl-L-methionine = 5-methyluridine(341) in tmRNA + S-adenosyl-L-homocysteine + H(+). In terms of biological role, dual-specificity methyltransferase that catalyzes the formation of 5-methyluridine at position 54 (m5U54) in all tRNAs, and that of position 341 (m5U341) in tmRNA (transfer-mRNA). The sequence is that of tRNA/tmRNA (uracil-C(5))-methyltransferase from Shewanella baltica (strain OS155 / ATCC BAA-1091).